A 122-amino-acid chain; its full sequence is Large ribosomal subunit protein uL14 (122 aa).

Belongs to the universal ribosomal protein uL14 family. As to quaternary structure, part of the 50S ribosomal subunit. Forms a cluster with proteins L3 and L19. In the 70S ribosome, L14 and L19 interact and together make contacts with the 16S rRNA in bridges B5 and B8.

In terms of biological role, binds to 23S rRNA. Forms part of two intersubunit bridges in the 70S ribosome. The protein is Large ribosomal subunit protein uL14 of Desulfatibacillum aliphaticivorans.